The following is a 207-amino-acid chain: MTAPNILILGIGNLLWADEGFGVRCVELLNERYRFPDGVRLMDGGTQGIYLVQHVQQADCLIVFDAVDYGLAPGTLKIVRDDEVPRFMGAKRMSLHQTGFQDVLALAAFSGAYPRELLLIGVQPEELEDFGGSLREPVRAQLEPALRVALEFLAERGVVAAARDGDAERLAPAPLALGRYEAGRPAEELAYRHGDIRFIPQQPLEDD.

Ni(2+) is bound by residues glutamate 19, aspartate 65, and histidine 96.

This sequence belongs to the peptidase A31 family.

Not known. Could be involved in the processing of hydrogenase. The chain is Hydrogenase expression/formation protein HoxM (hoxM) from Azotobacter vinelandii.